The following is a 431-amino-acid chain: Adenylosuccinate synthetase (431 aa).

GTP contacts are provided by residues 12–18 (GDEGKGK) and 40–42 (GHT). D13 (proton acceptor) is an active-site residue. Mg(2+)-binding residues include D13 and G40. Residues 13 to 16 (DEGK), 38 to 41 (NAGH), T131, R145, Q225, T240, and R304 each bind IMP. The active-site Proton donor is H41. Substrate is bound at residue 300–306 (TNTGRRR). GTP-binding positions include R306, 332–334 (KLD), and 414–416 (STS).

Belongs to the adenylosuccinate synthetase family. As to quaternary structure, homodimer. Mg(2+) serves as cofactor.

Its subcellular location is the cytoplasm. It catalyses the reaction IMP + L-aspartate + GTP = N(6)-(1,2-dicarboxyethyl)-AMP + GDP + phosphate + 2 H(+). It functions in the pathway purine metabolism; AMP biosynthesis via de novo pathway; AMP from IMP: step 1/2. In terms of biological role, plays an important role in the de novo pathway of purine nucleotide biosynthesis. Catalyzes the first committed step in the biosynthesis of AMP from IMP. The polypeptide is Adenylosuccinate synthetase (Methylocella silvestris (strain DSM 15510 / CIP 108128 / LMG 27833 / NCIMB 13906 / BL2)).